Consider the following 424-residue polypeptide: Isovaleryl-CoA dehydrogenase, mitochondrial (424 aa).

The transit peptide at 1 to 30 (MATAVRLLGRRVSSWRLRPLPSPLAVPQRA) directs the protein to the mitochondrion. N6-acetyllysine; alternate is present on residues Lys56, Lys65, and Lys76. Lys56, Lys65, and Lys76 each carry N6-succinyllysine; alternate. FAD is bound by residues 163-172 (LAMSEPNAGS) and 196-198 (WIT). Substrate is bound at residue Ser172. 220-221 (SR) is a substrate binding site. Position 239 is an N6-acetyllysine (Lys239). The residue at position 260 (Lys260) is an N6-acetyllysine; alternate. Lys260 carries the N6-succinyllysine; alternate modification. Residues Tyr275 and 282-285 (DLER) contribute to the substrate site. The Proton acceptor role is filled by Glu284. Residue Arg310 participates in FAD binding. Lys316 bears the N6-succinyllysine mark. Residues Gln321 and 378-382 (QCLGG) each bind FAD. 405–406 (GG) provides a ligand contact to substrate. 407-409 (TSE) contributes to the FAD binding site.

Belongs to the acyl-CoA dehydrogenase family. In terms of assembly, homotetramer. FAD serves as cofactor.

Its subcellular location is the mitochondrion matrix. The enzyme catalyses 3-methylbutanoyl-CoA + oxidized [electron-transfer flavoprotein] + H(+) = 3-methylbut-2-enoyl-CoA + reduced [electron-transfer flavoprotein]. The catalysed reaction is pentanoyl-CoA + oxidized [electron-transfer flavoprotein] + H(+) = (2E)-pentenoyl-CoA + reduced [electron-transfer flavoprotein]. It carries out the reaction hexanoyl-CoA + oxidized [electron-transfer flavoprotein] + H(+) = (2E)-hexenoyl-CoA + reduced [electron-transfer flavoprotein]. It catalyses the reaction butanoyl-CoA + oxidized [electron-transfer flavoprotein] + H(+) = (2E)-butenoyl-CoA + reduced [electron-transfer flavoprotein]. Its pathway is amino-acid degradation; L-leucine degradation; (S)-3-hydroxy-3-methylglutaryl-CoA from 3-isovaleryl-CoA: step 1/3. Functionally, catalyzes the conversion of isovaleryl-CoA/3-methylbutanoyl-CoA to 3-methylbut-2-enoyl-CoA as an intermediate step in the leucine (Leu) catabolic pathway. To a lesser extent, is also able to catalyze the oxidation of other saturated short-chain acyl-CoA thioesters as pentanoyl-CoA, hexenoyl-CoA and butenoyl-CoA. The polypeptide is Isovaleryl-CoA dehydrogenase, mitochondrial (Ivd) (Rattus norvegicus (Rat)).